The following is a 309-amino-acid chain: Ornithine carbamoyltransferase (309 aa).

Residues 56–59 (STRT), Gln-83, Arg-107, and 134–137 (HPCQ) contribute to the carbamoyl phosphate site. L-ornithine is bound by residues Asn-165, Asp-223, and 227 to 228 (SM). Carbamoyl phosphate is bound by residues 263 to 264 (CL) and Arg-291.

Belongs to the aspartate/ornithine carbamoyltransferase superfamily. OTCase family.

The protein localises to the cytoplasm. It catalyses the reaction carbamoyl phosphate + L-ornithine = L-citrulline + phosphate + H(+). It participates in amino-acid biosynthesis; L-arginine biosynthesis; L-arginine from L-ornithine and carbamoyl phosphate: step 1/3. In terms of biological role, reversibly catalyzes the transfer of the carbamoyl group from carbamoyl phosphate (CP) to the N(epsilon) atom of ornithine (ORN) to produce L-citrulline. The sequence is that of Ornithine carbamoyltransferase from Burkholderia mallei (strain ATCC 23344).